A 210-amino-acid chain; its full sequence is Placenta-expressed transcript 1 protein (210 aa).

An N-terminal signal peptide occupies residues Met1–Cys26. The Extracellular segment spans residues Thr27–Phe189. 2 N-linked (GlcNAc...) asparagine glycosylation sites follow: Asn67 and Asn94. Residues Arg190 to Leu209 traverse the membrane as a helical segment. Position 210 (Phe210) is a topological domain, cytoplasmic.

In terms of tissue distribution, highly expressed in placenta.

The protein resides in the membrane. It localises to the apical cell membrane. Modulates leading keratinocyte migration and cellular adhesion to matrix proteins during a wound-healing response and promotes wound repair. May play a role during trichilemmal differentiation of the hair follicle. This is Placenta-expressed transcript 1 protein (PLET1) from Sus scrofa (Pig).